Consider the following 465-residue polypeptide: MPYFSRLILFLFCLVVLVESRKPKKRRWTGQLETSKPSHLYKKNPDMTKIRHGKPQPLLRVDDHDFTMRPAFGGPAIPVGVDVQVESLDSISEVDMDFTMTLYLRHYWKDERLAFPSASNKSMTFDGRLVKKIWVPDVFFVHSKRSFIHDTTTDNIMLRVFPDGQVLYSMRITVTAMCNMDFSHFPLDSQTCSLELESYAYTDEDLMLYWKNGDESLKTDEKISLSQFLIQKFHTTSRLAFYSSTGWYNRLYINFTLRRHIFFFLLQTYFPATLMVMLSWVSFWIDRRAVPARVSLGITTVLTMSTIITGVNASMPRVSYIKAVDIYLWVSFVFVFLSVLEYAAVNYLTTVQERKERKLQEKFPCMCGMLHSRTMMLDGSYSESEANSLAGYPRSHILPEEERQDKIVVHLALSNESSSSRKKGLLKGQVGLRIFQNTHAIDKYSRLIFPASYIFFNLIYWSVFA.

The first 20 residues, 1–20 (MPYFSRLILFLFCLVVLVES), serve as a signal peptide directing secretion. Residues 21-260 (RKPKKRRWTG…LYINFTLRRH (240 aa)) are Extracellular-facing. Arg-105 lines the 4-aminobutanoate pocket. A glycan (N-linked (GlcNAc...) asparagine) is linked at Asn-120. Ser-169 contacts 4-aminobutanoate. A disulfide bridge links Cys-178 with Cys-192. Residue Glu-197 participates in 4-aminobutanoate binding. Asn-254 carries an N-linked (GlcNAc...) asparagine glycan. The helical transmembrane segment at 261-281 (IFFFLLQTYFPATLMVMLSWV) threads the bilayer. Residues 282-293 (SFWIDRRAVPAR) are Cytoplasmic-facing. A helical membrane pass occupies residues 294 to 314 (VSLGITTVLTMSTIITGVNAS). Topologically, residues 315 to 325 (MPRVSYIKAVD) are extracellular. Residues 326 to 346 (IYLWVSFVFVFLSVLEYAAVN) traverse the membrane as a helical segment. Topologically, residues 347–444 (YLTTVQERKE…FQNTHAIDKY (98 aa)) are cytoplasmic. The helical transmembrane segment at 445-465 (SRLIFPASYIFFNLIYWSVFA) threads the bilayer.

This sequence belongs to the ligand-gated ion channel (TC 1.A.9) family. Gamma-aminobutyric acid receptor (TC 1.A.9.5) subfamily. GABRR2 sub-subfamily. Three rho subunits (rho-1/GBRR1, rho-2/GBRR2 and rho-3/GBRR3) coassemble either to form functional homopentamers or heteropentamers. Rho-2 is unable to form a functional homopentamer. Interacts with SQSTM1.

The protein resides in the postsynaptic cell membrane. Its subcellular location is the cell membrane. The enzyme catalyses chloride(in) = chloride(out). Rho subunit of the pentameric ligand-gated chloride channels responsible for mediating the effects of gamma-aminobutyric acid (GABA), the major inhibitory neurotransmitter in the brain. Rho-containing GABA-gated chloride channels are a subclass of GABA(A) receptors (GABAARs) entirely composed of rho subunits, where GABA molecules bind at the rho intersubunit interfaces. When activated by GABA, rho-GABAARs selectively allow the flow of chloride anions across the cell membrane down their electrochemical gradient. Rho-2 GABAARs may contribute to the regulation of glial development in the cerebellum by controlling extrasynaptic transmission. Rho-2 GABAARs are also involved in neuronal tonic (extrasynaptic) and phasic (synaptic) transmission in the Purkinje neurons of the cerebellum. Rho-2 GABAARs expressed in retina may play a role in retinal neurotransmission. This is Gamma-aminobutyric acid receptor subunit rho-2 (GABRR2) from Bos taurus (Bovine).